A 404-amino-acid polypeptide reads, in one-letter code: Pre-heme d1 synthase (404 aa).

Residues 22-235 form the Radical SAM core domain; the sequence is GTPKPVVIWN…LIARALESAE (214 aa). Residues Cys-36, Cys-40, Cys-43, Cys-340, Cys-343, Cys-349, and Cys-371 each contribute to the [4Fe-4S] cluster site.

The protein belongs to the radical SAM superfamily. [4Fe-4S] cluster serves as cofactor.

The protein operates within porphyrin-containing compound metabolism. Involved in heme d1 biosynthesis. Radical SAM enzyme that catalyzes the removal of two propionate side chains from the intermediate 12,18-didecarboxysiroheme (DDSH) and may introduce the keto functions on rings A and B, yielding the heme d1 precursor dihydro-heme d1. This Dinoroseobacter shibae (strain DSM 16493 / NCIMB 14021 / DFL 12) protein is Pre-heme d1 synthase.